The chain runs to 273 residues: HMP-PP phosphatase (273 aa).

Residue Asp8 is the Nucleophile of the active site. Mg(2+)-binding residues include Asp8, Asp10, and Asp212.

This sequence belongs to the HAD-like hydrolase superfamily. Cof family. It depends on Mg(2+) as a cofactor.

It carries out the reaction 4-amino-2-methyl-5-(diphosphooxymethyl)pyrimidine + H2O = 4-amino-2-methyl-5-(phosphooxymethyl)pyrimidine + phosphate + H(+). Its function is as follows. Catalyzes the hydrolysis of 4-amino-2-methyl-5-hydroxymethylpyrimidine pyrophosphate (HMP-PP) to 4-amino-2-methyl-5-hydroxymethylpyrimidine phosphate (HMP-P). The chain is HMP-PP phosphatase from Yersinia pseudotuberculosis serotype O:1b (strain IP 31758).